Reading from the N-terminus, the 201-residue chain is Small ribosomal subunit protein uS4c (201 aa).

In terms of domain architecture, S4 RNA-binding spans 89–150 (MRLDNIVFRL…RQKSQAIITK (62 aa)).

Belongs to the universal ribosomal protein uS4 family. Part of the 30S ribosomal subunit. Contacts protein S5. The interaction surface between S4 and S5 is involved in control of translational fidelity.

Its subcellular location is the plastid. The protein resides in the chloroplast. Functionally, one of the primary rRNA binding proteins, it binds directly to 16S rRNA where it nucleates assembly of the body of the 30S subunit. In terms of biological role, with S5 and S12 plays an important role in translational accuracy. In Physcomitrium patens (Spreading-leaved earth moss), this protein is Small ribosomal subunit protein uS4c (rps4).